The sequence spans 144 residues: MSFLQKFRKFAMRGNVVDLAVGIIIGAAFGKIVSSLVANVIMPQLGLLIGGIDFKQFSWVLKPAQGDTPAVVMKYGIFLQNIFDFIIVAFAVFCIIKLINRNASQRGGKTRRAVQTECGRDAAYRDPRSLETTKQRHGAGYNDD.

2 consecutive transmembrane segments (helical) span residues 21–41 (VGII…ANVI) and 76–96 (GIFL…FCII). A disordered region spans residues 105 to 144 (QRGGKTRRAVQTECGRDAAYRDPRSLETTKQRHGAGYNDD). The segment covering 118–134 (CGRDAAYRDPRSLETTK) has biased composition (basic and acidic residues).

It belongs to the MscL family. As to quaternary structure, homopentamer.

It localises to the cell inner membrane. Functionally, channel that opens in response to stretch forces in the membrane lipid bilayer. May participate in the regulation of osmotic pressure changes within the cell. In Sodalis glossinidius (strain morsitans), this protein is Large-conductance mechanosensitive channel.